Reading from the N-terminus, the 373-residue chain is Pectin lyase D (373 aa).

Residues 1-19 (MKYAAALTAIAALAARAAA) form the signal peptide. 2 disulfides stabilise this stretch: Cys-82/Cys-101 and Cys-91/Cys-225. The N-linked (GlcNAc...) asparagine glycan is linked to Asn-128. Residue Arg-255 is part of the active site. Residue Asn-274 is glycosylated (N-linked (GlcNAc...) asparagine). A disulfide bond links Cys-321 and Cys-329. Asn-348 carries an N-linked (GlcNAc...) asparagine glycan. Positions 354–366 (LPSADAASTSPAS) are enriched in low complexity. The interval 354–373 (LPSADAASTSPASNAGQGNL) is disordered.

This sequence belongs to the polysaccharide lyase 1 family. Post-translationally, may be O-glycosylated; does not contain N-acetylglucosamine.

It localises to the secreted. It carries out the reaction Eliminative cleavage of (1-&gt;4)-alpha-D-galacturonan methyl ester to give oligosaccharides with 4-deoxy-6-O-methyl-alpha-D-galact-4-enuronosyl groups at their non-reducing ends.. Its function is as follows. Pectinolytic enzymes consist of four classes of enzymes: pectin lyase, polygalacturonase, pectin methylesterase and rhamnogalacturonase. Among pectinolytic enzymes, pectin lyase is the most important in depolymerization of pectin, since it cleaves internal glycosidic bonds of highly methylated pectins. The chain is Pectin lyase D (pelD) from Aspergillus niger.